The chain runs to 637 residues: MQNYKFLKDINFPSDLRKLSENDLQEVSNEVRKEMIDAVSETGGHLGAGLGVVELTVALHYVFDTPNDRLIWDVGHQTYPHKILTGRKSKIKTLRQGNGLSGFTKRSESEYDPFGAAHSSTSISSALGMAEANKLSNKLNNIIAVIGDGAISAGMAYEAMNNAGASKTKMIVILNDNDMSIAKPVGAMRTYLAKLLTGKIYFSLRETFKLIVSAFSKRFSVKAGKAEDFLRSAVTGGTLFNSLGFYYVGPIDGHDLSTLIPILKNARDSKHQGPIMIHIKTQKGKGYSYAEKASDHYHGVSKFNVVTGEQVKSGTNLPAYTKVFANTLVKHAERDSKVVGVTAAMPGGTGMDIFAKDFPKRMFDVGIAEQHAVTFAAGLATEGYKPYVAIYSTFLQRAYDQVVHDVAIQSLPVRFIIDRAGLVGADGSTHAGSFDITYLSTLPNFIVMAPSDEAELVKMTNTSMTINNKPCAIRYPRGNGIGVELPSIDENIEIGKGRVIQEGKQVCILSIGTRLEECKIAAAELKNKGIESTIVDARFAKPLDQELILKCAREHEAMITVEEGSIGGFGSHVENLLSEKGIFDKGLKFRTMILPDIFIEQDSPKKMYDVAGLNASQISKKILDILFTKESIKVVKN.

Thiamine diphosphate contacts are provided by residues His76 and 117–119 (AHS). Asp148 contacts Mg(2+). Residues 149–150 (GA), Asn177, Tyr287, and Glu369 each bind thiamine diphosphate. Asn177 is a binding site for Mg(2+).

This sequence belongs to the transketolase family. DXPS subfamily. As to quaternary structure, homodimer. Requires Mg(2+) as cofactor. It depends on thiamine diphosphate as a cofactor.

It catalyses the reaction D-glyceraldehyde 3-phosphate + pyruvate + H(+) = 1-deoxy-D-xylulose 5-phosphate + CO2. It functions in the pathway metabolic intermediate biosynthesis; 1-deoxy-D-xylulose 5-phosphate biosynthesis; 1-deoxy-D-xylulose 5-phosphate from D-glyceraldehyde 3-phosphate and pyruvate: step 1/1. Catalyzes the acyloin condensation reaction between C atoms 2 and 3 of pyruvate and glyceraldehyde 3-phosphate to yield 1-deoxy-D-xylulose-5-phosphate (DXP). The chain is 1-deoxy-D-xylulose-5-phosphate synthase from Pelagibacter ubique (strain HTCC1062).